Here is a 135-residue protein sequence, read N- to C-terminus: MSGHTSFYCGLLLLLLIQVQARPRADDSLQVLSRLLEDEYGHFNSEELNNEAQEISPAASLPDLNTDQSDLELPWDRESREIGGRSFRQEALLARLLQDLSNNPLRFKGRSKKGPSRSCFGLKLDRIGAMSGLGC.

The signal sequence occupies residues 1-25 (MSGHTSFYCGLLLLLLIQVQARPRA). Positions 26–113 (DDSLQVLSRL…PLRFKGRSKK (88 aa)) are excised as a propeptide. The disordered stretch occupies residues 46 to 67 (EELNNEAQEISPAASLPDLNTD). An intrachain disulfide couples Cys-119 to Cys-135.

The protein belongs to the natriuretic peptide family.

The protein localises to the secreted. Hormone which may be vasoactive and natriuretic. Has a cGMP-stimulating activity. This chain is C-type natriuretic peptide, found in Squalus acanthias (Spiny dogfish).